Here is a 243-residue protein sequence, read N- to C-terminus: Small ribosomal subunit protein uS2 (243 aa).

The protein belongs to the universal ribosomal protein uS2 family.

This chain is Small ribosomal subunit protein uS2, found in Chromobacterium violaceum (strain ATCC 12472 / DSM 30191 / JCM 1249 / CCUG 213 / NBRC 12614 / NCIMB 9131 / NCTC 9757 / MK).